A 397-amino-acid chain; its full sequence is uncharacterized protein (397 aa).

Residues 368–391 (TTKPGLHQPTQKRPTQTTSKPYIN) form a disordered region. A compositionally biased stretch (polar residues) spans 375–388 (QPTQKRPTQTTSKP).

This is an uncharacterized protein from Acanthamoeba polyphaga mimivirus (APMV).